A 1140-amino-acid polypeptide reads, in one-letter code: Condensin-2 complex subunit G2 (1140 aa).

An HEAT repeat occupies 460-493 (LLPALKSSLHDSSEKVRVAFVGMLLKIKAARAAK).

In terms of assembly, component of the condensin-2 complex, which contains the smc2 and smc4 heterodimer, and three non SMC subunits that probably regulate the complex: ncaph2, ncapd3 and ncapg2.

It is found in the nucleus. Regulatory subunit of the condensin-2 complex, a complex which establishes mitotic chromosome architecture and is involved in physical rigidity of the chromatid axis. Plays a role in the embryonic development of the head and kidney structures. In Danio rerio (Zebrafish), this protein is Condensin-2 complex subunit G2.